The following is a 319-amino-acid chain: Serpentine receptor class X-43 (319 aa).

7 consecutive transmembrane segments (helical) span residues 28-48 (VVSM…IGCF), 67-87 (AQLM…LLNI), 95-115 (YLFG…FLLM), 138-158 (IRTF…YLVV), 164-184 (FVFY…CGTL), 194-214 (TVLS…LMAF), and 267-287 (FFFT…VVVF).

Belongs to the G-protein coupled receptor 1 family. Expressed in ASI sensory neurons.

It is found in the cell membrane. Its subcellular location is the perikaryon. The protein resides in the cell projection. It localises to the cilium. Its function is as follows. Receptor for the ascaroside pheromone icas#9 which suppresses exploratory forgaging behavior. In response to ascaroside icas#9, may furthermore play a role in the expression of genes in the TGF-beta signaling pathway, such as daf-7, and in insulin signaling pathway, such as daf-28, which may in turn contribute to exploratory behavior. This is Serpentine receptor class X-43 from Caenorhabditis elegans.